We begin with the raw amino-acid sequence, 518 residues long: Integrator complex subunit 14 (518 aa).

Residues 2–204 (PTVVVMDVSL…KNVQSMFGKL (203 aa)) form the VWFA domain. Residues Ser10, Ser12, and Thr86 each contribute to the Mg(2+) site. At Lys418 the chain carries N6-acetyllysine.

Belongs to the Integrator subunit 14 family. In terms of assembly, component of the Integrator complex, composed of core subunits INTS1, INTS2, INTS3, INTS4, INTS5, INTS6, INTS7, INTS8, INTS9/RC74, INTS10, INTS11/CPSF3L, INTS12, INTS13, INTS14 and INTS15. The core complex associates with protein phosphatase 2A subunits PPP2CA and PPP2R1A, to form the Integrator-PP2A (INTAC) complex. INTS14 is part of the tail subcomplex, composed of INTS10, INTS13, INTS14 and INTS15.

It is found in the nucleus. In terms of biological role, component of the integrator complex, a multiprotein complex that terminates RNA polymerase II (Pol II) transcription in the promoter-proximal region of genes. The integrator complex provides a quality checkpoint during transcription elongation by driving premature transcription termination of transcripts that are unfavorably configured for transcriptional elongation: the complex terminates transcription by (1) catalyzing dephosphorylation of the C-terminal domain (CTD) of Pol II subunit POLR2A/RPB1 and SUPT5H/SPT5, (2) degrading the exiting nascent RNA transcript via endonuclease activity and (3) promoting the release of Pol II from bound DNA. The integrator complex is also involved in terminating the synthesis of non-coding Pol II transcripts, such as enhancer RNAs (eRNAs), small nuclear RNAs (snRNAs), telomerase RNAs and long non-coding RNAs (lncRNAs). Within the integrator complex, INTS14 is part of the integrator tail module that acts as a platform for the recruitment of transcription factors at promoters. In Bos taurus (Bovine), this protein is Integrator complex subunit 14.